The sequence spans 625 residues: Probable potassium transport system protein Kup (625 aa).

Helical transmembrane passes span leucine 10–leucine 30, leucine 50–valine 70, tyrosine 102–isoleucine 122, leucine 135–valine 155, phenylalanine 172–isoleucine 192, glycine 214–leucine 234, phenylalanine 251–leucine 271, leucine 284–serine 304, isoleucine 340–phenylalanine 360, alanine 369–isoleucine 389, leucine 397–alanine 417, and leucine 422–threonine 442.

This sequence belongs to the HAK/KUP transporter (TC 2.A.72) family.

The protein resides in the cell inner membrane. It catalyses the reaction K(+)(in) + H(+)(in) = K(+)(out) + H(+)(out). Its function is as follows. Transport of potassium into the cell. Likely operates as a K(+):H(+) symporter. This is Probable potassium transport system protein Kup from Herminiimonas arsenicoxydans.